The primary structure comprises 341 residues: Glycerol-3-phosphate dehydrogenase [NAD(P)+] (341 aa).

The NADPH site is built by Ser15, Trp16, Arg36, and Lys110. Positions 110, 139, and 141 each coordinate sn-glycerol 3-phosphate. Ala143 contributes to the NADPH binding site. Positions 194, 247, 257, 258, and 259 each coordinate sn-glycerol 3-phosphate. Lys194 (proton acceptor) is an active-site residue. NADPH is bound at residue Arg258. Val282 and Glu284 together coordinate NADPH.

Belongs to the NAD-dependent glycerol-3-phosphate dehydrogenase family.

Its subcellular location is the cytoplasm. The enzyme catalyses sn-glycerol 3-phosphate + NAD(+) = dihydroxyacetone phosphate + NADH + H(+). The catalysed reaction is sn-glycerol 3-phosphate + NADP(+) = dihydroxyacetone phosphate + NADPH + H(+). The protein operates within membrane lipid metabolism; glycerophospholipid metabolism. In terms of biological role, catalyzes the reduction of the glycolytic intermediate dihydroxyacetone phosphate (DHAP) to sn-glycerol 3-phosphate (G3P), the key precursor for phospholipid synthesis. The chain is Glycerol-3-phosphate dehydrogenase [NAD(P)+] from Xanthomonas campestris pv. campestris (strain 8004).